Here is a 490-residue protein sequence, read N- to C-terminus: Adenylosuccinate synthetase 1, chloroplastic (490 aa).

The transit peptide at 1 to 47 directs the protein to the chloroplast; sequence MSLSTLSHPAAAAAAATGSGKSHFRTAPAAQSVRFPKARPPVPAAVS. Residues 14–36 are disordered; sequence AAATGSGKSHFRTAPAAQSVRFP. GTP-binding positions include 77-83 and 105-107; these read GDEGKGK and GHT. Aspartate 78 functions as the Proton acceptor in the catalytic mechanism. Aspartate 78 and glycine 105 together coordinate Mg(2+). Residues 78–81, 103–106, threonine 195, arginine 209, glutamine 289, threonine 304, and arginine 368 each bind IMP; these read DEGK and NAGH. Histidine 106 serves as the catalytic Proton donor. 364–370 provides a ligand contact to substrate; that stretch reads TTTGRPR. GTP-binding positions include arginine 370, 396–398, and 479–481; these read KLD and GVG.

Belongs to the adenylosuccinate synthetase family. Homodimer. Requires Mg(2+) as cofactor.

The protein localises to the plastid. It localises to the chloroplast. It catalyses the reaction IMP + L-aspartate + GTP = N(6)-(1,2-dicarboxyethyl)-AMP + GDP + phosphate + 2 H(+). The protein operates within purine metabolism; AMP biosynthesis via de novo pathway; AMP from IMP: step 1/2. In terms of biological role, plays an important role in the de novo pathway and in the salvage pathway of purine nucleotide biosynthesis. Catalyzes the first committed step in the biosynthesis of AMP from IMP. This Sorghum bicolor (Sorghum) protein is Adenylosuccinate synthetase 1, chloroplastic.